Reading from the N-terminus, the 448-residue chain is Probable glycine dehydrogenase (decarboxylating) subunit 1 (448 aa).

It belongs to the GcvP family. N-terminal subunit subfamily. As to quaternary structure, the glycine cleavage system is composed of four proteins: P, T, L and H. In this organism, the P 'protein' is a heterodimer of two subunits.

It catalyses the reaction N(6)-[(R)-lipoyl]-L-lysyl-[glycine-cleavage complex H protein] + glycine + H(+) = N(6)-[(R)-S(8)-aminomethyldihydrolipoyl]-L-lysyl-[glycine-cleavage complex H protein] + CO2. The glycine cleavage system catalyzes the degradation of glycine. The P protein binds the alpha-amino group of glycine through its pyridoxal phosphate cofactor; CO(2) is released and the remaining methylamine moiety is then transferred to the lipoamide cofactor of the H protein. The sequence is that of Probable glycine dehydrogenase (decarboxylating) subunit 1 from Bacillus velezensis (strain DSM 23117 / BGSC 10A6 / LMG 26770 / FZB42) (Bacillus amyloliquefaciens subsp. plantarum).